Here is a 193-residue protein sequence, read N- to C-terminus: Holliday junction branch migration complex subunit RuvA (193 aa).

The domain I stretch occupies residues 1–63; sequence MIAHIQGKLV…EDSHSLYGFA (63 aa). A domain II region spans residues 64–142; it reads EKSEKEIFKL…KLYDLDQVSI (79 aa). Positions 143–145 are flexible linker; the sequence is SQS. The segment at 145–193 is domain III; sequence SNTNKDEALSALEVLGFIRKSAEKVVEKIVATMPDATVETIIKQALKNL.

Belongs to the RuvA family. In terms of assembly, homotetramer. Forms an RuvA(8)-RuvB(12)-Holliday junction (HJ) complex. HJ DNA is sandwiched between 2 RuvA tetramers; dsDNA enters through RuvA and exits via RuvB. An RuvB hexamer assembles on each DNA strand where it exits the tetramer. Each RuvB hexamer is contacted by two RuvA subunits (via domain III) on 2 adjacent RuvB subunits; this complex drives branch migration. In the full resolvosome a probable DNA-RuvA(4)-RuvB(12)-RuvC(2) complex forms which resolves the HJ.

The protein resides in the cytoplasm. Its function is as follows. The RuvA-RuvB-RuvC complex processes Holliday junction (HJ) DNA during genetic recombination and DNA repair, while the RuvA-RuvB complex plays an important role in the rescue of blocked DNA replication forks via replication fork reversal (RFR). RuvA specifically binds to HJ cruciform DNA, conferring on it an open structure. The RuvB hexamer acts as an ATP-dependent pump, pulling dsDNA into and through the RuvAB complex. HJ branch migration allows RuvC to scan DNA until it finds its consensus sequence, where it cleaves and resolves the cruciform DNA. In Flavobacterium psychrophilum (strain ATCC 49511 / DSM 21280 / CIP 103535 / JIP02/86), this protein is Holliday junction branch migration complex subunit RuvA.